We begin with the raw amino-acid sequence, 450 residues long: Succinate-semialdehyde dehydrogenase (450 aa).

119-120 (WN) contributes to the NADP(+) binding site. Arginine 128 provides a ligand contact to substrate. NADP(+)-binding positions include 143 to 146 (KPAK) and 197 to 198 (GS). The active-site Proton acceptor is the glutamate 219. Residue leucine 220 participates in NADP(+) binding. Residues arginine 247 and cysteine 253 each contribute to the substrate site. The active-site Nucleophile is the cysteine 253. Residue glutamate 350 coordinates NADP(+). Serine 410 contacts substrate.

This sequence belongs to the aldehyde dehydrogenase family. Homodimer.

It carries out the reaction succinate semialdehyde + NAD(+) + H2O = succinate + NADH + 2 H(+). The catalysed reaction is succinate semialdehyde + NADP(+) + H2O = succinate + NADPH + 2 H(+). It participates in alkaloid degradation; nicotine degradation. In terms of biological role, catalyzes the NAD(P)(+)-dependent oxidation of succinate semialdehyde to succinate, which may enter the citric acid cycle. Is involved in the catabolism of 4-methylaminobutanoate produced from nicotine. Acts preferentially with NADP(+) as cosubstrate but can also use NAD(+). To a lesser extent, is active also towards butyraldehyde (8.5% of the activity observed with succinate semialdehyde) and propionaldehyde (1.6% of the activity observed with succinate semialdehyde) as substrates. In Paenarthrobacter nicotinovorans (Arthrobacter nicotinovorans), this protein is Succinate-semialdehyde dehydrogenase (sad).